The following is a 755-amino-acid chain: Transcription factor kayak, isoforms A/B/F (755 aa).

Low complexity-rich tracts occupy residues 23–66 and 149–159; these read FAQQ…LPTQ and QQHYPSESQSS. Disordered stretches follow at residues 23-75, 149-168, 316-350, and 383-440; these read FAQQ…SQSV, QQHYPSESQSSASGWNPETP, LGQGSESEDSNASYNDTQMNEEQDTTDTSSAHTDS, and GSAS…KRRV. A compositionally biased stretch (polar residues) spans 316–333; sequence LGQGSESEDSNASYNDTQ. Composition is skewed to low complexity over residues 341–350 and 383–397; these read TDTSSAHTDS and GSASVGSSNANTSNT. The bZIP domain maps to 418–481; that stretch reads EQKRAVRRER…NQLEYLLATH (64 aa). The segment at 420 to 439 is basic motif; the sequence is KRAVRRERNKQAAARCRKRR. Residues 446–453 form a leucine-zipper region; that stretch reads LTEEVEQL. Low complexity predominate over residues 510–531; it reads AGSSGSGASSHHNHNSNDSSNG. Disordered stretches follow at residues 510–552 and 716–755; these read AGSS…PLDL and DGGTGLTPVSGPLVPNSSSTNKHPLELPTPTAEPSKLVSL. Residues 539–549 are compositionally biased toward polar residues; sequence TLNSTGRSNSP. At S548 the chain carries Phosphoserine.

This sequence belongs to the bZIP family. Fos subfamily. In terms of assembly, homodimer. Heterodimer with Jra. The kay-Jra heterodimer binds more stably to the AP-1 site than either of the two proteins alone. In terms of tissue distribution, early expression in the embryo is mesodermal and some of this expression is localized to a region surrounding the cephalic furrow. Later in embryonic development expression is ectodermal, corresponding to muscle attachment sites. Also observed in part of the mid- and hindgut and in the anal pad.

It is found in the nucleus. In terms of biological role, developmentally regulated transcription factor AP-1 binds and recognizes the enhancer DNA sequence: 5'-TGA[CG]TCA-3'. May play a role in the function or determination of a particular subset of cells in the developing embryo. It is able to carry out its function either independently of or in conjunction with Jra. This is Transcription factor kayak, isoforms A/B/F (kay) from Drosophila melanogaster (Fruit fly).